The sequence spans 478 residues: Putative L-amino-acid oxidase YobN (478 aa).

FAD-binding positions include serine 34, glutamate 53, arginine 61, and 80 to 81 (MR). The substrate site is built by arginine 81 and tyrosine 369. Residues glutamate 451 and 460 to 463 (MQGA) contribute to the FAD site.

Belongs to the flavin monoamine oxidase family. FIG1 subfamily. FAD is required as a cofactor.

It catalyses the reaction an L-alpha-amino acid + O2 + H2O = a 2-oxocarboxylate + H2O2 + NH4(+). The chain is Putative L-amino-acid oxidase YobN (yobN) from Bacillus subtilis (strain 168).